Consider the following 250-residue polypeptide: Putative ABC transporter ATP-binding protein YjkB (250 aa).

Residues 13–245 (ISFRSVRKSY…PQHEAAKEFL (233 aa)) enclose the ABC transporter domain. 49-56 (GPSGSGKS) is a binding site for ATP.

Belongs to the ABC transporter superfamily.

This chain is Putative ABC transporter ATP-binding protein YjkB (yjkB), found in Bacillus subtilis (strain 168).